The following is a 709-amino-acid chain: Mucin-20 (709 aa).

A signal peptide spans 1-25; it reads MGCLWGLALPLFFFCWEVGVSGSSA. Residues 57–69 are compositionally biased toward polar residues; it reads TQTLSAETSSRAS. Disordered stretches follow at residues 57–92 and 170–403; these read TQTL…ARET and KGLS…WSPG. Over residues 78–92 the composition is skewed to basic and acidic residues; that stretch reads AETRGAKRISPARET. 12 stretches are compositionally biased toward low complexity: residues 173–182, 190–199, 209–218, 228–237, 247–256, 266–275, 285–294, 304–313, 323–332, 342–351, 361–370, and 380–389; these read SSESSASSDS and SRASESSASS. Repeat copies occupy residues 173-192, 193-211, 212-230, 231-249, 250-268, 269-287, 288-306, 307-325, 326-344, 345-363, and 364-382. Residues 173 to 400 are 12 X 20 AA approximate tandem repeats of S-S-E-S-S-A-S-S-D-S-P-H-P-V-I-T-P-S-R-A; the sequence is SSESSASSDS…GPHPVITPSW (228 aa). The 12; approximate repeat unit spans residues 383-400; the sequence is SESSASSDGPHPVITPSW. An N-linked (GlcNAc...) asparagine glycan is attached at Asn-423. Disordered regions lie at residues 434 to 515 and 583 to 657; these read SSIP…APGA and NFTP…VSAG. Residues 450–656 are involved in oligomerization; sequence VKASSTSDPP…RTRPTTDVSA (207 aa). The span at 474–489 shows a compositional bias: polar residues; it reads VTASAETLSTAGTTES. Low complexity predominate over residues 613 to 652; the sequence is TTTNSSRGTNSTLAKITTSAKTTMKPPTATPTTARTRPTT. Asn-616 and Asn-622 each carry an N-linked (GlcNAc...) asparagine glycan. Residues 657–709 are interaction with MET; sequence GENGGFLLLRLSVASPEDLTDPRVAERLMQQLHRELHAHAPHFQVSLLRVRRG.

Interacts with MET; oligomerization increases affinity for MET. Highly expressed in kidney, moderately in placenta, lung, prostate, liver, and digestive system. In the kidney, localized in the proximal tubules but not in the glomerulus or distal tubules. Detected in most of the male urogenital tract epithelia, with the exception of epididymis.

The protein resides in the secreted. It is found in the apical cell membrane. Its subcellular location is the basolateral cell membrane. It localises to the cell projection. The protein localises to the microvillus membrane. Functionally, may regulate MET signaling cascade. Seems to decrease hepatocyte growth factor (HGF)-induced transient MAPK activation. Blocks GRB2 recruitment to MET thus suppressing the GRB2-RAS pathway. Inhibits HGF-induced proliferation of MMP1 and MMP9 expression. This Homo sapiens (Human) protein is Mucin-20 (MUC20).